Consider the following 87-residue polypeptide: Exodeoxyribonuclease 7 small subunit (87 aa).

Belongs to the XseB family. As to quaternary structure, heterooligomer composed of large and small subunits.

The protein resides in the cytoplasm. It catalyses the reaction Exonucleolytic cleavage in either 5'- to 3'- or 3'- to 5'-direction to yield nucleoside 5'-phosphates.. In terms of biological role, bidirectionally degrades single-stranded DNA into large acid-insoluble oligonucleotides, which are then degraded further into small acid-soluble oligonucleotides. This Halorhodospira halophila (strain DSM 244 / SL1) (Ectothiorhodospira halophila (strain DSM 244 / SL1)) protein is Exodeoxyribonuclease 7 small subunit.